Reading from the N-terminus, the 97-residue chain is Small ribosomal subunit protein uS17 (97 aa).

A disordered region spans residues 1 to 20 (MSEATVNDNAAVKNEKGARK).

It belongs to the universal ribosomal protein uS17 family. As to quaternary structure, part of the 30S ribosomal subunit.

One of the primary rRNA binding proteins, it binds specifically to the 5'-end of 16S ribosomal RNA. This is Small ribosomal subunit protein uS17 from Corynebacterium jeikeium (strain K411).